Consider the following 385-residue polypeptide: Probable protein phosphatase 2C 79 (385 aa).

Residues 1-18 (MLSLFFNFLTSCLWPSSS) form the signal peptide. The 310-residue stretch at 47–356 (DFSMAVVQAN…DDITVVVLFL (310 aa)) folds into the PPM-type phosphatase domain. S76 carries the phosphoserine modification. Mn(2+) contacts are provided by D87, G88, D288, and D347.

The protein belongs to the PP2C family. It depends on Mg(2+) as a cofactor. The cofactor is Mn(2+).

It carries out the reaction O-phospho-L-seryl-[protein] + H2O = L-seryl-[protein] + phosphate. It catalyses the reaction O-phospho-L-threonyl-[protein] + H2O = L-threonyl-[protein] + phosphate. May dephosphorylate and repress plasma membrane H(+)-ATPases (PM H(+)-ATPases, e.g. AHA1 and AHA2), thus influencing negatively plant growth and fitness. This chain is Probable protein phosphatase 2C 79, found in Arabidopsis thaliana (Mouse-ear cress).